Reading from the N-terminus, the 115-residue chain is MEYVYAALILNEADEEINEDNLTDVLDAAGVDVEESRVKALVAALEDVDIEEAVDQAAAAPVPASGGAAAPAEGDADEADEADEEAEEEAADDGGDDDDDEDDEASGEGLGELFG.

Positions 56–73 (QAAAAPVPASGGAAAPAE) are enriched in low complexity. The interval 56–115 (QAAAAPVPASGGAAAPAEGDADEADEADEEAEEEAADDGGDDDDDEDDEASGEGLGELFG) is disordered. Positions 74–106 (GDADEADEADEEAEEEAADDGGDDDDDEDDEAS) are enriched in acidic residues.

The protein belongs to the eukaryotic ribosomal protein P1/P2 family. As to quaternary structure, part of the 50S ribosomal subunit. Homodimer, it forms part of the ribosomal stalk which helps the ribosome interact with GTP-bound translation factors. Forms a heptameric uL10/P0(P1)2(P1)2(P1)2 complex, where uL10/P0 forms an elongated spine to which the P1 dimers bind in a sequential fashion.

Its function is as follows. Forms part of the ribosomal stalk, playing a central role in the interaction of the ribosome with GTP-bound translation factors. The chain is Large ribosomal subunit protein P1 from Haloarcula marismortui (strain ATCC 43049 / DSM 3752 / JCM 8966 / VKM B-1809) (Halobacterium marismortui).